The chain runs to 356 residues: Cyclin-D2-2 (356 aa).

A compositionally biased stretch (polar residues) spans 325 to 343 (LGSSQSNSNNKDYNSQDSA). Positions 325-356 (LGSSQSNSNNKDYNSQDSAPASKRRRLNTTPI) are disordered. The segment covering 346-356 (SKRRRLNTTPI) has biased composition (basic residues).

Belongs to the cyclin family. Cyclin D subfamily.

The polypeptide is Cyclin-D2-2 (CYCD2-2) (Oryza sativa subsp. japonica (Rice)).